The primary structure comprises 117 residues: Large ribosomal subunit protein bL20 (117 aa).

The protein belongs to the bacterial ribosomal protein bL20 family.

Binds directly to 23S ribosomal RNA and is necessary for the in vitro assembly process of the 50S ribosomal subunit. It is not involved in the protein synthesizing functions of that subunit. This is Large ribosomal subunit protein bL20 from Roseiflexus sp. (strain RS-1).